We begin with the raw amino-acid sequence, 400 residues long: Elongation factor Tu (400 aa).

Residues 10–209 (KPHINIGTIG…AVDDYIPTPE (200 aa)) form the tr-type G domain. The interval 19-26 (GHVDHGKT) is G1. Residue 19 to 26 (GHVDHGKT) coordinates GTP. Residue threonine 26 coordinates Mg(2+). Residues 60–64 (GITIS) are G2. The segment at 81–84 (DCPG) is G3. GTP-binding positions include 81 to 85 (DCPGH) and 136 to 139 (NKVD). Positions 136–139 (NKVD) are G4. The segment at 174-176 (SAK) is G5.

It belongs to the TRAFAC class translation factor GTPase superfamily. Classic translation factor GTPase family. EF-Tu/EF-1A subfamily. In terms of assembly, monomer.

It is found in the cytoplasm. The catalysed reaction is GTP + H2O = GDP + phosphate + H(+). GTP hydrolase that promotes the GTP-dependent binding of aminoacyl-tRNA to the A-site of ribosomes during protein biosynthesis. This Herpetosiphon aurantiacus (Herpetosiphon giganteus) protein is Elongation factor Tu.